We begin with the raw amino-acid sequence, 322 residues long: CRISPR-associated protein Cas1 1 (322 aa).

3 residues coordinate Mn(2+): glutamate 149, histidine 214, and glutamate 229.

This sequence belongs to the CRISPR-associated endonuclease Cas1 family. In terms of assembly, homodimer, forms a heterotetramer with a Cas2 homodimer. Requires Mg(2+) as cofactor. Mn(2+) is required as a cofactor.

Its function is as follows. CRISPR (clustered regularly interspaced short palindromic repeat), is an adaptive immune system that provides protection against mobile genetic elements (viruses, transposable elements and conjugative plasmids). CRISPR clusters contain spacers, sequences complementary to antecedent mobile elements, and target invading nucleic acids. CRISPR clusters are transcribed and processed into CRISPR RNA (crRNA). Acts as a dsDNA endonuclease. Involved in the integration of spacer DNA into the CRISPR cassette. The polypeptide is CRISPR-associated protein Cas1 1 (Methanobrevibacter ruminantium (strain ATCC 35063 / DSM 1093 / JCM 13430 / OCM 146 / M1) (Methanobacterium ruminantium)).